The following is a 323-amino-acid chain: DNA primase small subunit PriS (323 aa).

Active-site residues include D97, D99, and D274.

The protein belongs to the eukaryotic-type primase small subunit family. Heterodimer of a small subunit (PriS) and a large subunit (PriL). The cofactor is Mg(2+). Mn(2+) serves as cofactor.

In terms of biological role, catalytic subunit of DNA primase, an RNA polymerase that catalyzes the synthesis of short RNA molecules used as primers for DNA polymerase during DNA replication. The small subunit contains the primase catalytic core and has DNA synthesis activity on its own. Binding to the large subunit stabilizes and modulates the activity, increasing the rate of DNA synthesis while decreasing the length of the DNA fragments, and conferring RNA synthesis capability. The DNA polymerase activity may enable DNA primase to also catalyze primer extension after primer synthesis. May also play a role in DNA repair. This Methanothermobacter thermautotrophicus (strain ATCC 29096 / DSM 1053 / JCM 10044 / NBRC 100330 / Delta H) (Methanobacterium thermoautotrophicum) protein is DNA primase small subunit PriS.